The sequence spans 405 residues: Multidrug resistance protein MdtA (405 aa).

The signal sequence occupies residues 1–22; sequence MKTPRRFPLIALTVAAVLTAAA. Residues 35 to 52 show a composition bias toward polar residues; sequence VQNRQGTEQQRASNSQGS. Positions 35–62 are disordered; it reads VQNRQGTEQQRASNSQGSAKRAGNAPPV.

It belongs to the membrane fusion protein (MFP) (TC 8.A.1) family. Part of a tripartite efflux system composed of MdtA, MdtB and MdtC.

The protein resides in the cell inner membrane. The polypeptide is Multidrug resistance protein MdtA (Erwinia amylovora (strain ATCC 49946 / CCPPB 0273 / Ea273 / 27-3)).